Consider the following 350-residue polypeptide: Hydroxymethylglutaryl-CoA synthase (350 aa).

Asp30 lines the (3S)-3-hydroxy-3-methylglutaryl-CoA pocket. The Proton donor/acceptor role is filled by Glu82. (3S)-3-hydroxy-3-methylglutaryl-CoA-binding residues include Cys114, Ser155, Thr203, and His236. Catalysis depends on Cys114, which acts as the Acyl-thioester intermediate. His236 (proton donor/acceptor) is an active-site residue. Arg241 contributes to the CoA binding site. Positions 245, 268, and 298 each coordinate (3S)-3-hydroxy-3-methylglutaryl-CoA.

Belongs to the thiolase-like superfamily. Archaeal HMG-CoA synthase family. Interacts with acetoacetyl-CoA thiolase that catalyzes the precedent step in the pathway and with a DUF35 protein. The acetoacetyl-CoA thiolase/HMG-CoA synthase complex channels the intermediate via a fused CoA-binding site, which allows for efficient coupling of the endergonic thiolase reaction with the exergonic HMGCS reaction.

The catalysed reaction is acetoacetyl-CoA + acetyl-CoA + H2O = (3S)-3-hydroxy-3-methylglutaryl-CoA + CoA + H(+). The protein operates within metabolic intermediate biosynthesis; (R)-mevalonate biosynthesis; (R)-mevalonate from acetyl-CoA: step 2/3. In terms of biological role, catalyzes the condensation of acetyl-CoA with acetoacetyl-CoA to form 3-hydroxy-3-methylglutaryl-CoA (HMG-CoA). Functions in the mevalonate (MVA) pathway leading to isopentenyl diphosphate (IPP), a key precursor for the biosynthesis of isoprenoid compounds that are building blocks of archaeal membrane lipids. This is Hydroxymethylglutaryl-CoA synthase from Pyrobaculum aerophilum (strain ATCC 51768 / DSM 7523 / JCM 9630 / CIP 104966 / NBRC 100827 / IM2).